The chain runs to 143 residues: NADH-quinone oxidoreductase subunit A (143 aa).

A run of 3 helical transmembrane segments spans residues 8–28, 63–83, and 90–110; these read FGNVFAFLALGIVFVAGGYLT, FYVVALIFIIFDVEVVFLYPW, and LGVFALVEVLVFAGILILGLV.

Belongs to the complex I subunit 3 family. As to quaternary structure, NDH-1 is composed of 14 different subunits. Subunits NuoA, H, J, K, L, M, N constitute the membrane sector of the complex.

Its subcellular location is the cell inner membrane. The catalysed reaction is a quinone + NADH + 5 H(+)(in) = a quinol + NAD(+) + 4 H(+)(out). Functionally, NDH-1 shuttles electrons from NADH, via FMN and iron-sulfur (Fe-S) centers, to quinones in the respiratory chain. The immediate electron acceptor for the enzyme in this species is believed to be a menaquinone. Couples the redox reaction to proton translocation (for every two electrons transferred, four hydrogen ions are translocated across the cytoplasmic membrane), and thus conserves the redox energy in a proton gradient. This is NADH-quinone oxidoreductase subunit A from Chlorobium phaeobacteroides (strain DSM 266 / SMG 266 / 2430).